Here is a 442-residue protein sequence, read N- to C-terminus: Thymidine phosphorylase (442 aa).

It belongs to the thymidine/pyrimidine-nucleoside phosphorylase family. In terms of assembly, homodimer.

The catalysed reaction is thymidine + phosphate = 2-deoxy-alpha-D-ribose 1-phosphate + thymine. Its pathway is pyrimidine metabolism; dTMP biosynthesis via salvage pathway; dTMP from thymine: step 1/2. Its function is as follows. The enzymes which catalyze the reversible phosphorolysis of pyrimidine nucleosides are involved in the degradation of these compounds and in their utilization as carbon and energy sources, or in the rescue of pyrimidine bases for nucleotide synthesis. In Vibrio parahaemolyticus serotype O3:K6 (strain RIMD 2210633), this protein is Thymidine phosphorylase.